A 242-amino-acid chain; its full sequence is MTPLQLSEQGKIFHSQIRHLLQQLESNLAELRGGSDYAQRKIKIAAAHSLSLGLLPSIISQMPPLFTWAIEAIDVDEAVDKLREGQSDCIFSFHDEDLLEAPFDHIRLFESQLFPVCASDEHGEALFDLVQPHFPLLNYSRNSYMGRLINRTLTRHSELSFSTFFVSSMSELLKQVALDGCGIAWLPEYAIQQEIRSGQLVVLNRDELVIPIQAYAYRMNTRMNPVAERFWRELRELEIVLS.

It belongs to the LysR transcriptional regulatory family.

Represses EHEC virulence expression. Down-regulates expression of LEE (locus of enterocyte effacement) and iraD genes, and alters AE (attaching and effacing) lesion formation. May regulate transcription through interactions with another HTH DNA-binding protein. The protein is HTH domain-truncated transcriptional regulator QseD (qseD) of Escherichia coli O157:H7.